A 339-amino-acid chain; its full sequence is Ketol-acid reductoisomerase (NADP(+)) (339 aa).

Residues 1-182 (MRVYYDRDAD…GGGRSGIIET (182 aa)) enclose the KARI N-terminal Rossmann domain. Residues 24 to 27 (YGSQ), lysine 48, serine 51, threonine 53, and 83 to 86 (DELQ) each bind NADP(+). Histidine 108 is a catalytic residue. Glycine 134 is a binding site for NADP(+). A KARI C-terminal knotted domain is found at 183–328 (NFREECETDL…AKLRGMMPWI (146 aa)). Mg(2+) contacts are provided by aspartate 191, glutamate 195, glutamate 227, and glutamate 231. Substrate is bound at residue serine 252.

Belongs to the ketol-acid reductoisomerase family. Mg(2+) is required as a cofactor.

The enzyme catalyses (2R)-2,3-dihydroxy-3-methylbutanoate + NADP(+) = (2S)-2-acetolactate + NADPH + H(+). The catalysed reaction is (2R,3R)-2,3-dihydroxy-3-methylpentanoate + NADP(+) = (S)-2-ethyl-2-hydroxy-3-oxobutanoate + NADPH + H(+). Its pathway is amino-acid biosynthesis; L-isoleucine biosynthesis; L-isoleucine from 2-oxobutanoate: step 2/4. The protein operates within amino-acid biosynthesis; L-valine biosynthesis; L-valine from pyruvate: step 2/4. Involved in the biosynthesis of branched-chain amino acids (BCAA). Catalyzes an alkyl-migration followed by a ketol-acid reduction of (S)-2-acetolactate (S2AL) to yield (R)-2,3-dihydroxy-isovalerate. In the isomerase reaction, S2AL is rearranged via a Mg-dependent methyl migration to produce 3-hydroxy-3-methyl-2-ketobutyrate (HMKB). In the reductase reaction, this 2-ketoacid undergoes a metal-dependent reduction by NADPH to yield (R)-2,3-dihydroxy-isovalerate. This chain is Ketol-acid reductoisomerase (NADP(+)), found in Rhizobium johnstonii (strain DSM 114642 / LMG 32736 / 3841) (Rhizobium leguminosarum bv. viciae).